The following is a 53-amino-acid chain: Mannose/glucose-specific lectin alpha chain (53 aa).

The protein belongs to the leguminous lectin family. Heterodimer of an alpha and a beta chain.

In terms of biological role, this lectin specifically binds mannose and glucose. The protein is Mannose/glucose-specific lectin alpha chain of Vicia cracca (Bird vetch).